The sequence spans 461 residues: A-type ATP synthase subunit B (461 aa).

Belongs to the ATPase alpha/beta chains family. Has multiple subunits with at least A(3), B(3), C, D, E, F, H, I and proteolipid K(x).

It localises to the cell membrane. Functionally, component of the A-type ATP synthase that produces ATP from ADP in the presence of a proton gradient across the membrane. The B chain is a regulatory subunit. This Nitrosopumilus maritimus (strain SCM1) protein is A-type ATP synthase subunit B.